We begin with the raw amino-acid sequence, 197 residues long: Alkyl hydroperoxide reductase C (197 aa).

The region spanning 2-163 is the Thioredoxin domain; sequence VLVTQNAPNF…MIRMVDALDF (162 aa). Catalysis depends on Cys50, which acts as the Cysteine sulfenic acid (-SOH) intermediate.

Belongs to the peroxiredoxin family. AhpC/Prx1 subfamily. As to quaternary structure, homodimer; disulfide-linked, upon oxidation. 5 homodimers assemble to form a ring-like decamer.

It is found in the cytoplasm. The catalysed reaction is a hydroperoxide + NADH + H(+) = an alcohol + NAD(+) + H2O. Functionally, thiol-specific peroxidase that catalyzes the reduction of hydrogen peroxide and organic hydroperoxides to water and alcohols, respectively. Plays a role in cell protection against oxidative stress by detoxifying peroxides. The polypeptide is Alkyl hydroperoxide reductase C (Buchnera aphidicola subsp. Acyrthosiphon pisum (strain APS) (Acyrthosiphon pisum symbiotic bacterium)).